Reading from the N-terminus, the 349-residue chain is tRNA pseudouridine synthase D (349 aa).

Substrate is bound at residue Phe-27. Asp-80 acts as the Nucleophile in catalysis. Asn-129 is a substrate binding site. Positions 155-303 constitute a TRUD domain; the sequence is GVPNYFGAQR…VEAARRAMLL (149 aa). Phe-329 lines the substrate pocket.

It belongs to the pseudouridine synthase TruD family.

The catalysed reaction is uridine(13) in tRNA = pseudouridine(13) in tRNA. Its function is as follows. Responsible for synthesis of pseudouridine from uracil-13 in transfer RNAs. The chain is tRNA pseudouridine synthase D from Shigella boydii serotype 18 (strain CDC 3083-94 / BS512).